A 172-amino-acid polypeptide reads, in one-letter code: Large ribosomal subunit protein bL9 (172 aa).

This sequence belongs to the bacterial ribosomal protein bL9 family.

In terms of biological role, binds to the 23S rRNA. The chain is Large ribosomal subunit protein bL9 from Chlamydia caviae (strain ATCC VR-813 / DSM 19441 / 03DC25 / GPIC) (Chlamydophila caviae).